The following is a 1117-amino-acid chain: Zinc finger E-box-binding homeobox 1 (1117 aa).

Disordered stretches follow at residues 1 to 103 (MADG…QNHD) and 122 to 143 (APEE…NGTP). The segment covering 15–30 (PRRNNVTNYNTVVEAN) has biased composition (low complexity). Phosphoserine is present on residues Ser-31 and Ser-33. A C2H2-type 1 zinc finger spans residues 150–173 (LTCPYCDRGYKRFTSLKEHIKYRH). Residues Lys-166 and Lys-175 each participate in a glycyl lysine isopeptide (Lys-Gly) (interchain with G-Cter in SUMO2) cross-link. 2 C2H2-type zinc fingers span residues 180-202 (FSCS…MTSH) and 220-242 (FKCT…LRIH). The C2H2-type 4; atypical zinc-finger motif lies at 248-272 (YECPNCKKRFSHSGSYSSHISSKKC). Positions 278 to 307 (VNGRPRSGLKTSQCSSPSLSTSPGSPTRPQ) are disordered. Lys-287 is covalently cross-linked (Glycyl lysine isopeptide (Lys-Gly) (interchain with G-Cter in SUMO2)). Residues 288-304 (TSQCSSPSLSTSPGSPT) are compositionally biased toward low complexity. Residues Ser-293 and Ser-302 each carry the phosphoserine modification. Residues Lys-311 and Lys-315 each participate in a glycyl lysine isopeptide (Lys-Gly) (interchain with G-Cter in SUMO2) cross-link. A Glycyl lysine isopeptide (Lys-Gly) (interchain with G-Cter in SUMO); alternate cross-link involves residue Lys-327. Lys-327 participates in a covalent cross-link: Glycyl lysine isopeptide (Lys-Gly) (interchain with G-Cter in SUMO2); alternate. Glycyl lysine isopeptide (Lys-Gly) (interchain with G-Cter in SUMO2) cross-links involve residues Lys-419, Lys-473, Lys-484, Lys-495, and Lys-528. 3 disordered regions span residues 476–501 (IPAP…TDKS), 528–566 (KHYD…SQPP), and 613–687 (GQIP…SPLN). Residues 484-501 (KSEKLPEDLTVKSETDKS) show a composition bias toward basic and acidic residues. Residues 559-618 (DLSPSQPPLKNLLSLLKAYYALNAQPSTEELSKIADSVNLPLDGVKKWFEKMQAGQIPGQ) constitute a DNA-binding region (homeobox; atypical). Ser-657, Ser-664, Ser-671, and Ser-678 each carry phosphoserine. The span at 673–687 (MNGSRSCTSSPSPLN) shows a compositional bias: polar residues. Residue Thr-680 is modified to Phosphothreonine. The residue at position 682 (Ser-682) is a Phosphoserine. Residue Lys-752 forms a Glycyl lysine isopeptide (Lys-Gly) (interchain with G-Cter in SUMO); alternate linkage. Lys-752 participates in a covalent cross-link: Glycyl lysine isopeptide (Lys-Gly) (interchain with G-Cter in SUMO2); alternate. The tract at residues 834–876 (PPVKVIQPNGNQDERQDTSSEGVSTVEDQNDSDSTPPKKKTRK) is disordered. A compositionally biased stretch (polar residues) spans 852–868 (SSEGVSTVEDQNDSDST). C2H2-type zinc fingers lie at residues 882-904 (YACD…KYEH) and 910-932 (HECG…MRLH). The segment at 938-959 (YQCDKCGKRFSHSGSYSQHMNH) adopts a C2H2-type 7; atypical zinc-finger fold. The tract at residues 991–1117 (EHVGARASPS…QLSEEKTNEA (127 aa)) is disordered. Composition is skewed to acidic residues over residues 1013 to 1032 (EEDE…MEEL), 1042 to 1069 (QGEE…DEAE), and 1098 to 1109 (SEMESESESEQL).

Belongs to the delta-EF1/ZFH-1 C2H2-type zinc-finger family. Interacts (via N-terminus) with SMARCA4/BRG1. Post-translationally, ubiquitinated, leading to degradation in a proteasome-dependent manner. Deubiquitinated by USP51, leading to stabilization. Expressed in the external germinal layer (EGL) and internal granular layer (IGL) of the cerebellum (at protein level).

Its subcellular location is the nucleus. Functionally, acts as a transcriptional repressor. Binds to E-box sequences in the immunoglobulin heavy chain enhancer as well as in the regulatory regions of many other tissue-specific genes. Represses E-cadherin promoter and induces an epithelial-mesenchymal transition (EMT) by recruiting SMARCA4/BRG1. Represses BCL6 transcription in the presence of the corepressor CTBP1. Positively regulates neuronal differentiation. Represses RCOR1 transcription activation during neurogenesis. Represses transcription by binding to the E box (5'-CANNTG-3'). In the absence of TGFB1, acts as a repressor of COL1A2 transcription via binding to the E-box in the upstream enhancer region. Promotes tumorigenicity by repressing stemness-inhibiting microRNAs. This is Zinc finger E-box-binding homeobox 1 from Mus musculus (Mouse).